The primary structure comprises 305 residues: UDP-N-acetylenolpyruvoylglucosamine reductase 2 (305 aa).

Residues 33–197 form the FAD-binding PCMH-type domain; it reads VGGKADVFVA…LEARFELEEG (165 aa). Arginine 176 is an active-site residue. Catalysis depends on serine 226, which acts as the Proton donor. Glutamate 296 is a catalytic residue.

It belongs to the MurB family. The cofactor is FAD.

The protein localises to the cytoplasm. It catalyses the reaction UDP-N-acetyl-alpha-D-muramate + NADP(+) = UDP-N-acetyl-3-O-(1-carboxyvinyl)-alpha-D-glucosamine + NADPH + H(+). The protein operates within cell wall biogenesis; peptidoglycan biosynthesis. Cell wall formation. The protein is UDP-N-acetylenolpyruvoylglucosamine reductase 2 (murB2) of Bacillus anthracis.